We begin with the raw amino-acid sequence, 212 residues long: Kynurenine formamidase (212 aa).

A substrate-binding site is contributed by Trp-18. The Zn(2+) site is built by His-48, His-52, and Asp-54. Residue His-58 is the Proton donor/acceptor of the active site. Zn(2+) contacts are provided by His-160 and Glu-172.

The protein belongs to the Cyclase 1 superfamily. KynB family. As to quaternary structure, homodimer. Zn(2+) is required as a cofactor.

It carries out the reaction N-formyl-L-kynurenine + H2O = L-kynurenine + formate + H(+). It participates in amino-acid degradation; L-tryptophan degradation via kynurenine pathway; L-kynurenine from L-tryptophan: step 2/2. In terms of biological role, catalyzes the hydrolysis of N-formyl-L-kynurenine to L-kynurenine, the second step in the kynurenine pathway of tryptophan degradation. This Paraburkholderia phytofirmans (strain DSM 17436 / LMG 22146 / PsJN) (Burkholderia phytofirmans) protein is Kynurenine formamidase.